A 257-amino-acid polypeptide reads, in one-letter code: 5-oxoprolinase subunit A (257 aa).

This sequence belongs to the LamB/PxpA family. Forms a complex composed of PxpA, PxpB and PxpC.

The catalysed reaction is 5-oxo-L-proline + ATP + 2 H2O = L-glutamate + ADP + phosphate + H(+). Catalyzes the cleavage of 5-oxoproline to form L-glutamate coupled to the hydrolysis of ATP to ADP and inorganic phosphate. In Halalkalibacterium halodurans (strain ATCC BAA-125 / DSM 18197 / FERM 7344 / JCM 9153 / C-125) (Bacillus halodurans), this protein is 5-oxoprolinase subunit A.